The sequence spans 468 residues: MSKSVQLIKDHDVKWIDLRFTDTKGTQHHVTMPARDALEDDFFEVGKMFDGSSIAGWKGIEASDMILLPDDDTAVLDPFTEDATLILVCDIIEPSTMQGYDRDPRAIAHRAEEYLKTTGIGDTVFAGPEPEFFIFDEVKFKSDISGSMFKIYSEQGSWMSDQDIEGGNKGHRPGVKGGYFPVPPFDHDHEIRTAMCNALEEMGQTVEVHHHEVATAGQNEIGVKFNTLVKKADEVQTLKYVVHNVADAYGRTATFMPKPLYGDNGSGMHVHMSIAKDGKNTFAGEGYAGLSETALYFIGGIIKHGKALNGFTNPATNSYKRLVPGFEAPVMLAYSARNRSASIRIPYVNSPRGRRIEARFPDPAANPYLAFAALLMAGLDGIQNKIHPGDAADKNLYDLPPEEAKEIPQVCGSLKEALEELDKGRAFLTKGGVFSDDFIDAYIALKSEEEIKVRTFVHPLEYELYYSC.

Residues 11 to 96 (HDVKWIDLRF…LVCDIIEPST (86 aa)) form the GS beta-grasp domain. Positions 104-468 (PRAIAHRAEE…PLEYELYYSC (365 aa)) constitute a GS catalytic domain. Mg(2+)-binding residues include Glu129 and Glu131. Residue Glu207 participates in ATP binding. Mg(2+) contacts are provided by Glu212 and Glu220. L-glutamate contacts are provided by residues 264-265 (NG) and Gly265. His269 serves as a coordination point for Mg(2+). ATP is bound by residues 271 to 273 (HMS) and Ser273. L-glutamate-binding residues include Arg321, Glu327, and Arg339. Residues Arg339, Arg344, and Arg352 each coordinate ATP. Residue Glu357 coordinates Mg(2+). Arg359 lines the L-glutamate pocket. The residue at position 397 (Tyr397) is an O-AMP-tyrosine.

It belongs to the glutamine synthetase family. As to quaternary structure, oligomer of 12 subunits arranged in the form of two hexagons. Requires Mg(2+) as cofactor. It depends on Mn(2+) as a cofactor.

The catalysed reaction is L-glutamate + NH4(+) + ATP = L-glutamine + ADP + phosphate + H(+). When cellular nitrogen levels are high, the C-terminal adenylyl transferase (AT) of GlnE inhibits GlnA by covalent transfer of an adenylyl group from ATP to Tyr-397. Conversely, when nitrogen levels are low, the N-terminal adenylyl removase (AR) of GlnE activates GlnA by removing the adenylyl group by phosphorolysis. The fully adenylated enzyme complex is inactive. Catalyzes the formation of glutamine from glutamate and ammonia. In vitro, can also use hydroxylamine, methylamine and ethylamine, with 32%, 7% and 1% activity compared to ammonia, respectively. This Pseudomonas taetrolens protein is Glutamine synthetase.